Here is a 289-residue protein sequence, read N- to C-terminus: Nodulation protein NolT (289 aa).

A signal peptide spans 1–33 (MFGSAHGDTTSSDTSGRRPLRLVVLPLLLALSS). Cysteine 34 is lipidated: N-palmitoyl cysteine. Cysteine 34 carries S-diacylglycerol cysteine lipidation. The chain crosses the membrane as a helical span at residues 233-253 (VAVGVSAAVFAVTCYLLFIVL).

Belongs to the YscJ lipoprotein family.

Its subcellular location is the cell outer membrane. This Sinorhizobium fredii (strain NBRC 101917 / NGR234) protein is Nodulation protein NolT (nolT).